Here is a 297-residue protein sequence, read N- to C-terminus: 4-hydroxy-tetrahydrodipicolinate synthase (297 aa).

Residue T55 participates in pyruvate binding. The active-site Proton donor/acceptor is the Y144. The active-site Schiff-base intermediate with substrate is K172. A pyruvate-binding site is contributed by I213.

The protein belongs to the DapA family. In terms of assembly, homotetramer; dimer of dimers.

It localises to the cytoplasm. The catalysed reaction is L-aspartate 4-semialdehyde + pyruvate = (2S,4S)-4-hydroxy-2,3,4,5-tetrahydrodipicolinate + H2O + H(+). It participates in amino-acid biosynthesis; L-lysine biosynthesis via DAP pathway; (S)-tetrahydrodipicolinate from L-aspartate: step 3/4. In terms of biological role, catalyzes the condensation of (S)-aspartate-beta-semialdehyde [(S)-ASA] and pyruvate to 4-hydroxy-tetrahydrodipicolinate (HTPA). This is 4-hydroxy-tetrahydrodipicolinate synthase from Lactococcus lactis subsp. cremoris (strain MG1363).